A 306-amino-acid chain; its full sequence is uncharacterized protein (306 aa).

To M.tuberculosis Rv1486c, M.bovis Mb1522c and M.leprae ML1804.

This is an uncharacterized protein from Mycobacterium avium.